Reading from the N-terminus, the 659-residue chain is DNA mismatch repair protein MutL (659 aa).

Positions 338 to 459 are disordered; that stretch reads GAPRGASKPG…DTTSERDSLP (122 aa). Residues 352–362 show a composition bias toward basic and acidic residues; sequence SPEHSPTDRDA. A compositionally biased stretch (polar residues) spans 374–391; the sequence is SDGNGQRTAASGATSESP.

The protein belongs to the DNA mismatch repair MutL/HexB family.

In terms of biological role, this protein is involved in the repair of mismatches in DNA. It is required for dam-dependent methyl-directed DNA mismatch repair. May act as a 'molecular matchmaker', a protein that promotes the formation of a stable complex between two or more DNA-binding proteins in an ATP-dependent manner without itself being part of a final effector complex. The protein is DNA mismatch repair protein MutL of Halobacterium salinarum (strain ATCC 29341 / DSM 671 / R1).